The chain runs to 561 residues: Malto-oligosyltrehalose trehalohydrolase (561 aa).

Position 253 to 258 (253 to 258 (RLDAVH)) interacts with substrate. The Nucleophile role is filled by D255. E286 (proton donor) is an active-site residue. Residues 311–315 (DDFHH) and 379–384 (HDQVGN) contribute to the substrate site.

It belongs to the glycosyl hydrolase 13 family. In terms of assembly, homodimer.

Its subcellular location is the cytoplasm. It catalyses the reaction hydrolysis of (1-&gt;4)-alpha-D-glucosidic linkage in 4-alpha-D-[(1-&gt;4)-alpha-D-glucanosyl]n trehalose to yield trehalose and (1-&gt;4)-alpha-D-glucan.. It functions in the pathway glycan biosynthesis; trehalose biosynthesis. The protein is Malto-oligosyltrehalose trehalohydrolase (treZ) of Saccharolobus solfataricus (strain ATCC 35092 / DSM 1617 / JCM 11322 / P2) (Sulfolobus solfataricus).